Consider the following 675-residue polypeptide: Pesticidal crystal protein Cry10Aa (675 aa).

It belongs to the delta endotoxin family.

In terms of biological role, promotes colloidosmotic lysis by binding to the midgut epithelial cells of mosquitos. Active on Aedes aegypti. In Bacillus thuringiensis subsp. israelensis, this protein is Pesticidal crystal protein Cry10Aa (cry10Aa).